We begin with the raw amino-acid sequence, 688 residues long: Polyphosphate kinase (688 aa).

N45 lines the ATP pocket. Mg(2+) is bound by residues R375 and R405. Residues 430–464 form the PLD phosphodiesterase domain; that stretch reads PGLKIHAKLFLISRKENGEVVRYAHIGTGNFNEKT. H435 functions as the Phosphohistidine intermediate in the catalytic mechanism. Residues Y468, R564, and H592 each coordinate ATP.

This sequence belongs to the polyphosphate kinase 1 (PPK1) family. Mg(2+) is required as a cofactor. An intermediate of this reaction is the autophosphorylated ppk in which a phosphate is covalently linked to a histidine residue through a N-P bond.

The enzyme catalyses [phosphate](n) + ATP = [phosphate](n+1) + ADP. Its function is as follows. Catalyzes the reversible transfer of the terminal phosphate of ATP to form a long-chain polyphosphate (polyP). The sequence is that of Polyphosphate kinase from Escherichia coli O6:H1 (strain CFT073 / ATCC 700928 / UPEC).